The following is a 226-amino-acid chain: Thymidylate kinase (226 aa).

9-16 (GPEGSGKS) provides a ligand contact to ATP.

The protein belongs to the thymidylate kinase family.

It carries out the reaction dTMP + ATP = dTDP + ADP. Its function is as follows. Phosphorylation of dTMP to form dTDP in both de novo and salvage pathways of dTTP synthesis. In Roseiflexus sp. (strain RS-1), this protein is Thymidylate kinase.